We begin with the raw amino-acid sequence, 512 residues long: tRNA-2-methylthio-N(6)-dimethylallyladenosine synthase (512 aa).

The tract at residues 1–20 (MLQQADGVSPDRSSCDTPAP) is disordered. Positions 21 to 137 (RTFEVRTYGC…LPTLLDRARH (117 aa)) constitute an MTTase N-terminal domain. Residues C30, C66, C100, C174, C178, and C181 each coordinate [4Fe-4S] cluster. The Radical SAM core domain maps to 160-397 (RESAYAAWVS…ELQERISWEE (238 aa)). A TRAM domain is found at 399–469 (RAQIGREVEL…PHHLIADAGP (71 aa)). Basic and acidic residues predominate over residues 470 to 486 (AEHRRTRAGDAHAEGRT). Residues 470 to 512 (AEHRRTRAGDAHAEGRTPKTGVGLGMPGIGAPEPAPVTQGCAL) are disordered.

Belongs to the methylthiotransferase family. MiaB subfamily. As to quaternary structure, monomer. [4Fe-4S] cluster serves as cofactor.

Its subcellular location is the cytoplasm. The catalysed reaction is N(6)-dimethylallyladenosine(37) in tRNA + (sulfur carrier)-SH + AH2 + 2 S-adenosyl-L-methionine = 2-methylsulfanyl-N(6)-dimethylallyladenosine(37) in tRNA + (sulfur carrier)-H + 5'-deoxyadenosine + L-methionine + A + S-adenosyl-L-homocysteine + 2 H(+). In terms of biological role, catalyzes the methylthiolation of N6-(dimethylallyl)adenosine (i(6)A), leading to the formation of 2-methylthio-N6-(dimethylallyl)adenosine (ms(2)i(6)A) at position 37 in tRNAs that read codons beginning with uridine. The polypeptide is tRNA-2-methylthio-N(6)-dimethylallyladenosine synthase (Mycolicibacterium gilvum (strain PYR-GCK) (Mycobacterium gilvum (strain PYR-GCK))).